The following is a 425-amino-acid chain: Histidine--tRNA ligase (425 aa).

It belongs to the class-II aminoacyl-tRNA synthetase family. In terms of assembly, homodimer.

It localises to the cytoplasm. It carries out the reaction tRNA(His) + L-histidine + ATP = L-histidyl-tRNA(His) + AMP + diphosphate + H(+). This chain is Histidine--tRNA ligase, found in Listeria monocytogenes serovar 1/2a (strain ATCC BAA-679 / EGD-e).